The following is a 161-amino-acid chain: Eukaryotic translation initiation factor 5A-1 (161 aa).

At Lys-54 the chain carries Hypusine.

The protein belongs to the eIF-5A family. Lys-54 undergoes hypusination, a unique post-translational modification that consists in the addition of a butylamino group from spermidine to lysine side chain, leading to the formation of the unusual amino acid hypusine. eIF-5As are the only known proteins to undergo this modification, which is essential for their function. As to expression, expressed specifically in the germline in the distal region of gonads where germ cells actively proliferate.

It is found in the cytoplasm. Functionally, translation factor that promotes translation elongation and termination, particularly upon ribosome stalling at specific amino acid sequence contexts. Binds between the exit (E) and peptidyl (P) site of the ribosome and promotes rescue of stalled ribosome: specifically required for efficient translation of polyproline-containing peptides as well as other motifs that stall the ribosome. Acts as a ribosome quality control (RQC) cofactor by joining the RQC complex to facilitate peptidyl transfer during CAT tailing step. Required for mitotic germ cell proliferation, gametogenesis after entry into meiosis, and localization of the P granule component pgl-1 on P granules. This chain is Eukaryotic translation initiation factor 5A-1 (iff-1), found in Caenorhabditis elegans.